Consider the following 461-residue polypeptide: Cysteine--tRNA ligase (461 aa).

Cys28 is a Zn(2+) binding site. The short motif at 30 to 40 is the 'HIGH' region element; sequence ITIYDLCHIGH. 3 residues coordinate Zn(2+): Cys209, His234, and Glu238. The short motif at 266-270 is the 'KMSKS' region element; the sequence is KMSKS. ATP is bound at residue Lys269.

Belongs to the class-I aminoacyl-tRNA synthetase family. Monomer. The cofactor is Zn(2+).

It is found in the cytoplasm. It carries out the reaction tRNA(Cys) + L-cysteine + ATP = L-cysteinyl-tRNA(Cys) + AMP + diphosphate. This Photorhabdus laumondii subsp. laumondii (strain DSM 15139 / CIP 105565 / TT01) (Photorhabdus luminescens subsp. laumondii) protein is Cysteine--tRNA ligase.